The following is a 235-amino-acid chain: MAKHGKNYREAIKDIDLTAKYEVSEAMALTVQTGKAKFDETVDVALNLGVNPKYSDQMVRGAVSLPHGLGKTIRVAAFCKGDKETEAREAGADFVGGDDLIEKVKNGFLDFDSAVATPDMMASVGKIGKILGPRGLMPNAKTGTVSFDIGKAVSELKAGKVEFKVDKAGVLHVPLGKRSFGPEKLLDNFRAVIDAVMRLKPSAAKGTYLQAMALATTMGPGIKVDTQSVRKLLEG.

This sequence belongs to the universal ribosomal protein uL1 family. Part of the 50S ribosomal subunit.

Functionally, binds directly to 23S rRNA. The L1 stalk is quite mobile in the ribosome, and is involved in E site tRNA release. Its function is as follows. Protein L1 is also a translational repressor protein, it controls the translation of the L11 operon by binding to its mRNA. The chain is Large ribosomal subunit protein uL1 from Solidesulfovibrio magneticus (strain ATCC 700980 / DSM 13731 / RS-1) (Desulfovibrio magneticus).